We begin with the raw amino-acid sequence, 552 residues long: Two-component response regulator ARR10 (552 aa).

One can recognise a Response regulatory domain in the interval Arg-18–Val-133. Asp-69 bears the 4-aspartylphosphate mark. The disordered stretch occupies residues Lys-139 to Gln-181. Positions Asn-151–Asn-173 form a coiled coil. A compositionally biased stretch (acidic residues) spans Tyr-163–Asp-177. The Nuclear localization signal signature appears at Lys-182 to Arg-185. Positions Arg-185–Arg-235 form a DNA-binding region, myb-like GARP.

The protein belongs to the ARR family. Type-B subfamily. In terms of assembly, binds the target DNA as a monomer. Post-translationally, two-component system major event consists of a His-to-Asp phosphorelay between a sensor histidine kinase (HK) and a response regulator (RR). In plants, the His-to-Asp phosphorelay involves an additional intermediate named Histidine-containing phosphotransfer protein (HPt). This multistep phosphorelay consists of a His-Asp-His-Asp sequential transfer of a phosphate group between first a His and an Asp of the HK protein, followed by the transfer to a conserved His of the HPt protein and finally the transfer to an Asp in the receiver domain of the RR protein. Detected in the whole plant. Predominantly expressed in roots and leaves.

It localises to the nucleus. Functionally, transcriptional activator that binds specifically to the DNA sequence 5'-[AG]GATT-3'. Functions as a response regulator involved in His-to-Asp phosphorelay signal transduction system. Phosphorylation of the Asp residue in the receiver domain activates the ability of the protein to promote the transcription of target genes. Could directly activate some type-A response regulators in response to cytokinins. The polypeptide is Two-component response regulator ARR10 (ARR10) (Arabidopsis thaliana (Mouse-ear cress)).